A 123-amino-acid chain; its full sequence is Small ribosomal subunit protein uS12 (123 aa).

Positions 1 to 24 are disordered; sequence MPTINQLVRKGRTPQKVKSKVPAM. Over residues 9-19 the composition is skewed to basic residues; the sequence is RKGRTPQKVKS. Asp89 is subject to 3-methylthioaspartic acid.

The protein belongs to the universal ribosomal protein uS12 family. Part of the 30S ribosomal subunit. Contacts proteins S8 and S17. May interact with IF1 in the 30S initiation complex.

Functionally, with S4 and S5 plays an important role in translational accuracy. Its function is as follows. Interacts with and stabilizes bases of the 16S rRNA that are involved in tRNA selection in the A site and with the mRNA backbone. Located at the interface of the 30S and 50S subunits, it traverses the body of the 30S subunit contacting proteins on the other side and probably holding the rRNA structure together. The combined cluster of proteins S8, S12 and S17 appears to hold together the shoulder and platform of the 30S subunit. This Sphingopyxis alaskensis (strain DSM 13593 / LMG 18877 / RB2256) (Sphingomonas alaskensis) protein is Small ribosomal subunit protein uS12.